A 247-amino-acid polypeptide reads, in one-letter code: tRNA pseudouridine synthase A (247 aa).

Asp53 serves as the catalytic Nucleophile. Tyr112 lines the substrate pocket.

This sequence belongs to the tRNA pseudouridine synthase TruA family. As to quaternary structure, homodimer.

The catalysed reaction is uridine(38/39/40) in tRNA = pseudouridine(38/39/40) in tRNA. Functionally, formation of pseudouridine at positions 38, 39 and 40 in the anticodon stem and loop of transfer RNAs. The polypeptide is tRNA pseudouridine synthase A (Anaplasma marginale (strain Florida)).